The primary structure comprises 345 residues: Phenylalanine--tRNA ligase alpha subunit (345 aa).

Glu-262 contacts Mg(2+).

This sequence belongs to the class-II aminoacyl-tRNA synthetase family. Phe-tRNA synthetase alpha subunit type 1 subfamily. Tetramer of two alpha and two beta subunits. Mg(2+) is required as a cofactor.

The protein resides in the cytoplasm. The enzyme catalyses tRNA(Phe) + L-phenylalanine + ATP = L-phenylalanyl-tRNA(Phe) + AMP + diphosphate + H(+). This chain is Phenylalanine--tRNA ligase alpha subunit, found in Ehrlichia canis (strain Jake).